A 279-amino-acid polypeptide reads, in one-letter code: Thymidylate synthase (279 aa).

Arg133 to Arg134 serves as a coordination point for dUMP. Cys154 acts as the Nucleophile in catalysis. DUMP contacts are provided by residues Arg178–Asp181, Asn189, and His219–Tyr221. Asp181 is a (6R)-5,10-methylene-5,6,7,8-tetrahydrofolate binding site. Ala278 contributes to the (6R)-5,10-methylene-5,6,7,8-tetrahydrofolate binding site.

It belongs to the thymidylate synthase family. Bacterial-type ThyA subfamily. In terms of assembly, homodimer.

It is found in the cytoplasm. It catalyses the reaction dUMP + (6R)-5,10-methylene-5,6,7,8-tetrahydrofolate = 7,8-dihydrofolate + dTMP. The protein operates within pyrimidine metabolism; dTTP biosynthesis. Catalyzes the reductive methylation of 2'-deoxyuridine-5'-monophosphate (dUMP) to 2'-deoxythymidine-5'-monophosphate (dTMP) while utilizing 5,10-methylenetetrahydrofolate (mTHF) as the methyl donor and reductant in the reaction, yielding dihydrofolate (DHF) as a by-product. This enzymatic reaction provides an intracellular de novo source of dTMP, an essential precursor for DNA biosynthesis. This chain is Thymidylate synthase, found in Streptococcus pyogenes serotype M6 (strain ATCC BAA-946 / MGAS10394).